Here is a 931-residue protein sequence, read N- to C-terminus: Valine--tRNA ligase (931 aa).

The 'HIGH' region motif lies at 42 to 52 (PNVTGSLHMGH). Positions 523 to 527 (KMSKS) match the 'KMSKS' region motif. ATP is bound at residue lysine 526. The stretch at 859–931 (MAGLIDKEAE…EEQLEKIKYL (73 aa)) forms a coiled coil.

This sequence belongs to the class-I aminoacyl-tRNA synthetase family. ValS type 1 subfamily. Monomer.

It is found in the cytoplasm. The enzyme catalyses tRNA(Val) + L-valine + ATP = L-valyl-tRNA(Val) + AMP + diphosphate. Catalyzes the attachment of valine to tRNA(Val). As ValRS can inadvertently accommodate and process structurally similar amino acids such as threonine, to avoid such errors, it has a 'posttransfer' editing activity that hydrolyzes mischarged Thr-tRNA(Val) in a tRNA-dependent manner. In Alcanivorax borkumensis (strain ATCC 700651 / DSM 11573 / NCIMB 13689 / SK2), this protein is Valine--tRNA ligase.